A 939-amino-acid chain; its full sequence is Protein translocase subunit SecA 1 (939 aa).

ATP contacts are provided by residues Gln85, 103–107, and Asp504; that span reads GEGKT. Residues 848-939 are disordered; the sequence is EVPVEDEKPS…QSKGGRRRKK (92 aa). 3 stretches are compositionally biased toward basic and acidic residues: residues 852 to 863, 872 to 889, and 914 to 925; these read EDEKPSLEKEDA, PEIR…DRLH, and PVRSEADGLTRA. The span at 926–939 shows a compositional bias: basic residues; it reads ERRKQSKGGRRRKK.

Belongs to the SecA family. In terms of assembly, monomer and homodimer. Part of the essential Sec protein translocation apparatus which comprises SecA, SecYEG and auxiliary proteins SecDF. Other proteins may also be involved.

The protein resides in the cell membrane. It localises to the cytoplasm. The catalysed reaction is ATP + H2O + cellular proteinSide 1 = ADP + phosphate + cellular proteinSide 2.. Its function is as follows. Part of the Sec protein translocase complex. Interacts with the SecYEG preprotein conducting channel. Has a central role in coupling the hydrolysis of ATP to the transfer of proteins into and across the cell membrane, serving as an ATP-driven molecular motor driving the stepwise translocation of polypeptide chains across the membrane. The polypeptide is Protein translocase subunit SecA 1 (Streptomyces avermitilis (strain ATCC 31267 / DSM 46492 / JCM 5070 / NBRC 14893 / NCIMB 12804 / NRRL 8165 / MA-4680)).